The chain runs to 244 residues: Monothiol glutaredoxin-4 (244 aa).

Residues 2–106 (SVEITFVEQF…LKAAIDEYIQ (105 aa)) enclose the Thioredoxin domain. The Glutaredoxin domain occupies 147 to 244 (NERLSTLTNA…NGELQEMLPN (98 aa)). Glutathione is bound at residue lysine 164. Cysteine 172 lines the [2Fe-2S] cluster pocket. Glutathione-binding positions include 201-205 (RQGLK) and 226-227 (LD).

This sequence belongs to the glutaredoxin family. Monothiol subfamily. As to quaternary structure, homodimer. Interacts with php4.

It is found in the cytoplasm. The protein localises to the nucleus. Functionally, monothiol glutaredoxin involved in the biogenesis of iron-sulfur clusters. Binds one iron-sulfur cluster per dimer. The iron-sulfur cluster is bound between subunits, and is complexed by a bound glutathione and a cysteine residue from each subunit. The protein is Monothiol glutaredoxin-4 (grx4) of Schizosaccharomyces pombe (strain 972 / ATCC 24843) (Fission yeast).